Reading from the N-terminus, the 124-residue chain is Superoxide reductase (124 aa).

6 residues coordinate Fe cation: glutamate 14, histidine 16, histidine 41, histidine 47, cysteine 111, and histidine 114.

Belongs to the desulfoferrodoxin family. In terms of assembly, homotetramer. Fe cation serves as cofactor.

The enzyme catalyses reduced [rubredoxin] + superoxide + 2 H(+) = oxidized [rubredoxin] + H2O2. In terms of biological role, uses electrons from reduced NADP, by way of rubredoxin and an oxidoreductase, to catalyze the reduction of superoxide to hydrogen peroxide. The sequence is that of Superoxide reductase (sorA) from Pyrococcus furiosus (strain ATCC 43587 / DSM 3638 / JCM 8422 / Vc1).